A 432-amino-acid polypeptide reads, in one-letter code: 5-methylthioadenosine/S-adenosylhomocysteine deaminase (432 aa).

2 residues coordinate Zn(2+): histidine 62 and histidine 64. Substrate-binding residues include glutamate 91 and histidine 184. Histidine 211 is a Zn(2+) binding site. Substrate-binding residues include glutamate 214 and aspartate 299. Position 299 (aspartate 299) interacts with Zn(2+).

It belongs to the metallo-dependent hydrolases superfamily. MTA/SAH deaminase family. It depends on Zn(2+) as a cofactor.

The catalysed reaction is S-adenosyl-L-homocysteine + H2O + H(+) = S-inosyl-L-homocysteine + NH4(+). The enzyme catalyses S-methyl-5'-thioadenosine + H2O + H(+) = S-methyl-5'-thioinosine + NH4(+). Catalyzes the deamination of 5-methylthioadenosine and S-adenosyl-L-homocysteine into 5-methylthioinosine and S-inosyl-L-homocysteine, respectively. Is also able to deaminate adenosine. This is 5-methylthioadenosine/S-adenosylhomocysteine deaminase from Haloarcula marismortui (strain ATCC 43049 / DSM 3752 / JCM 8966 / VKM B-1809) (Halobacterium marismortui).